The sequence spans 195 residues: Putative deoxynucleoside kinase (195 aa).

This is Putative deoxynucleoside kinase from Frog virus 3 (isolate Goorha) (FV-3).